Here is a 222-residue protein sequence, read N- to C-terminus: Cytidylate kinase (222 aa).

10 to 18 provides a ligand contact to ATP; it reads GPAGSGKSS.

It belongs to the cytidylate kinase family. Type 1 subfamily.

Its subcellular location is the cytoplasm. The enzyme catalyses CMP + ATP = CDP + ADP. The catalysed reaction is dCMP + ATP = dCDP + ADP. This chain is Cytidylate kinase, found in Acholeplasma laidlawii (strain PG-8A).